The chain runs to 182 residues: Dual-action ribosomal maturation protein DarP (182 aa).

Residues Met1–Glu20 are disordered.

This sequence belongs to the DarP family.

It localises to the cytoplasm. Member of a network of 50S ribosomal subunit biogenesis factors which assembles along the 30S-50S interface, preventing incorrect 23S rRNA structures from forming. Promotes peptidyl transferase center (PTC) maturation. The polypeptide is Dual-action ribosomal maturation protein DarP (Sodalis glossinidius (strain morsitans)).